Consider the following 614-residue polypeptide: Putative ABC transporter ATP-binding protein MA_1747 (614 aa).

2 consecutive ABC transporter domains span residues 11-251 (VRLE…KLGI) and 319-552 (VLIE…AGLL). ATP contacts are provided by residues 45 to 52 (GPSGCGKS) and 352 to 359 (GHNGAGKT).

This sequence belongs to the ABC transporter superfamily.

Its subcellular location is the cell membrane. Functionally, probably part of an ABC transporter complex. Responsible for energy coupling to the transport system. This is Putative ABC transporter ATP-binding protein MA_1747 from Methanosarcina acetivorans (strain ATCC 35395 / DSM 2834 / JCM 12185 / C2A).